The primary structure comprises 134 residues: Large ribosomal subunit protein bL20 (134 aa).

The protein belongs to the bacterial ribosomal protein bL20 family.

Binds directly to 23S ribosomal RNA and is necessary for the in vitro assembly process of the 50S ribosomal subunit. It is not involved in the protein synthesizing functions of that subunit. In Rhizobium rhizogenes (strain K84 / ATCC BAA-868) (Agrobacterium radiobacter), this protein is Large ribosomal subunit protein bL20.